Consider the following 1377-residue polypeptide: DNA-directed RNA polymerase subunit beta (1377 aa).

The protein belongs to the RNA polymerase beta chain family. As to quaternary structure, the RNAP catalytic core consists of 2 alpha, 1 beta, 1 beta' and 1 omega subunit. When a sigma factor is associated with the core the holoenzyme is formed, which can initiate transcription.

The enzyme catalyses RNA(n) + a ribonucleoside 5'-triphosphate = RNA(n+1) + diphosphate. In terms of biological role, DNA-dependent RNA polymerase catalyzes the transcription of DNA into RNA using the four ribonucleoside triphosphates as substrates. The sequence is that of DNA-directed RNA polymerase subunit beta from Brucella canis (strain ATCC 23365 / NCTC 10854 / RM-666).